We begin with the raw amino-acid sequence, 205 residues long: Protein N-terminal glutamine amidohydrolase (205 aa).

Active-site residues include Cys20, His74, and Asp90.

It belongs to the NTAQ1 family. In terms of assembly, monomer.

It carries out the reaction N-terminal L-glutaminyl-[protein] + H2O = N-terminal L-glutamyl-[protein] + NH4(+). Its function is as follows. Mediates the side-chain deamidation of N-terminal glutamine residues to glutamate, an important step in N-end rule pathway of protein degradation. Conversion of the resulting N-terminal glutamine to glutamate renders the protein susceptible to arginylation, polyubiquitination and degradation as specified by the N-end rule. Does not act on substrates with internal or C-terminal glutamine and does not act on non-glutamine residues in any position. The chain is Protein N-terminal glutamine amidohydrolase (tun) from Drosophila virilis (Fruit fly).